Here is a 463-residue protein sequence, read N- to C-terminus: Elongation factor 1-alpha 2 (463 aa).

At Gly2 the chain carries N,N,N-trimethylglycine. One can recognise a tr-type G domain in the interval 5 to 242 (KTHINIVVIG…DTILPPTRPT (238 aa)). A G1 region spans residues 14-21 (GHVDSGKS). Residues Asp17, Ser18, Gly19, Lys20, Ser21, and Thr22 each coordinate GTP. Asp17 lines the Mg(2+) pocket. Position 36 is an N6,N6,N6-trimethyllysine; alternate (Lys36). Lys36 is subject to N6,N6-dimethyllysine; alternate. Residue Lys36 is modified to N6-methyllysine; alternate. The residue at position 55 (Lys55) is an N6,N6,N6-trimethyllysine. Lys55 carries the post-translational modification N6,N6-dimethyllysine. Positions 70–74 (GITID) are G2. Residue Lys79 is modified to N6,N6,N6-trimethyllysine. Positions 91-94 (DAPG) are G3. Asn153, Lys154, and Asp156 together coordinate GTP. The tract at residues 153-156 (NKMD) is G4. Ser163 is modified (phosphoserine). An N6,N6-dimethyllysine; alternate modification is found at Lys165. Lys165 bears the N6-methyllysine; alternate mark. An N6,N6,N6-trimethyllysine; alternate; by EEF1AKMT3 modification is found at Lys165. Lys179 is subject to N6-acetyllysine. Ser194, Gly195, and Trp196 together coordinate GTP. Residues 194–196 (SGW) form a G5 region. The residue at position 224 (Ser224) is a Phosphoserine. Residue Thr239 is modified to Phosphothreonine. Glu301 and Glu374 each carry 5-glutamyl glycerylphosphorylethanolamine. Lys439 carries the post-translational modification N6-acetyllysine. The interval 444-463 (KSGGAGKVTKSAQKAQKAGK) is disordered.

The protein belongs to the TRAFAC class translation factor GTPase superfamily. Classic translation factor GTPase family. EF-Tu/EF-1A subfamily. In terms of assembly, homodimer; arranged in a 'head to tail' dimer configuration. Post-translationally, trimethylated at Lys-165 by EEF1AKMT3. Mono-, di-, and trimethylated at Lys-36 by EEF1AKMT4; trimethylated form is predominant. Methylation by EEF1AKMT4 contributes to the fine-tuning of translation rates for a subset of tRNAs. Trimethylated at the N-terminus and dimethylated at Lys-55 by METTL13.

The protein resides in the endoplasmic reticulum membrane. The catalysed reaction is GTP + H2O = GDP + phosphate + H(+). Its function is as follows. Translation elongation factor that catalyzes the GTP-dependent binding of aminoacyl-tRNA (aa-tRNA) to the A-site of ribosomes during the elongation phase of protein synthesis. Base pairing between the mRNA codon and the aa-tRNA anticodon promotes GTP hydrolysis, releasing the aa-tRNA from EEF1A1 and allowing its accommodation into the ribosome. The growing protein chain is subsequently transferred from the P-site peptidyl tRNA to the A-site aa-tRNA, extending it by one amino acid through ribosome-catalyzed peptide bond formation. The sequence is that of Elongation factor 1-alpha 2 (Eef1a2) from Rattus norvegicus (Rat).